We begin with the raw amino-acid sequence, 325 residues long: Ribosomal RNA small subunit methyltransferase H (325 aa).

Residues 42–44, Asp-62, Phe-86, Asp-105, and Gln-112 contribute to the S-adenosyl-L-methionine site; that span reads GGH.

It belongs to the methyltransferase superfamily. RsmH family.

The protein resides in the cytoplasm. The catalysed reaction is cytidine(1402) in 16S rRNA + S-adenosyl-L-methionine = N(4)-methylcytidine(1402) in 16S rRNA + S-adenosyl-L-homocysteine + H(+). In terms of biological role, specifically methylates the N4 position of cytidine in position 1402 (C1402) of 16S rRNA. The polypeptide is Ribosomal RNA small subunit methyltransferase H (Cupriavidus metallidurans (strain ATCC 43123 / DSM 2839 / NBRC 102507 / CH34) (Ralstonia metallidurans)).